The chain runs to 350 residues: Protein Wnt-8b (350 aa).

Positions 1-21 are cleaved as a signal peptide; that stretch reads MFLMKPVCVLLVTCVLHRSHA. C53 and C64 are disulfide-bonded. N102 carries N-linked (GlcNAc...) asparagine glycosylation. Cystine bridges form between C103–C111, C113–C131, C179–C193, C181–C188, C255–C293, C271–C286, C290–C332, C308–C323, C310–C320, and C315–C316. Residue S185 is the site of O-palmitoleoyl serine attachment. A glycan (N-linked (GlcNAc...) asparagine) is linked at N258.

This sequence belongs to the Wnt family. In terms of processing, palmitoleoylation is required for efficient binding to frizzled receptors. Depalmitoleoylation leads to Wnt signaling pathway inhibition. Proteolytic processing by TIKI1 and TIKI2 promotes oxidation and formation of large disulfide-bond oligomers, leading to inactivation of WNT8B.

It localises to the secreted. The protein resides in the extracellular space. The protein localises to the extracellular matrix. Its function is as follows. Ligand for members of the frizzled family of seven transmembrane receptors. May play an important role in the development and differentiation of certain forebrain structures, notably the hippocampus. The sequence is that of Protein Wnt-8b (Wnt8b) from Mus musculus (Mouse).